We begin with the raw amino-acid sequence, 423 residues long: Histidine--tRNA ligase (423 aa).

The protein belongs to the class-II aminoacyl-tRNA synthetase family. In terms of assembly, homodimer.

It localises to the cytoplasm. The catalysed reaction is tRNA(His) + L-histidine + ATP = L-histidyl-tRNA(His) + AMP + diphosphate + H(+). This Prochlorococcus marinus (strain NATL1A) protein is Histidine--tRNA ligase.